Here is a 447-residue protein sequence, read N- to C-terminus: Crotonyl-CoA reductase (447 aa).

Belongs to the zinc-containing alcohol dehydrogenase family. Crotonyl-CoA carboxylase/reductase subfamily. Homodimer.

The enzyme catalyses butanoyl-CoA + NADP(+) = (2E)-butenoyl-CoA + NADPH + H(+). Its activity is regulated as follows. Inhibited by divalent cations (30-100%), beta-chloromercuribenzoate (85%), iodoacetamide (40%) and N-ethylmaleamide (80%). The presence of CoA thioesters containing 12-20 carbon atoms results in inhibition of enzyme activity. The greatest degree of inhibition is observed in the presence of palmitoyl-CoA and myristoyl-CoA. The branched-chain fatty acids, isopalmitoyl-CoA and isomyristoyl-CoA are less effective inhibitors of the crotonyl-CoA reductase. Concentrations of NADPH above 200 uM lead to inhibition of enzyme activity. Its function is as follows. May play a role in supplying butyryl-CoA for straight-chain fatty acid biosynthesis. Catalyzes the conversion of crotonyl-CoA to butyryl-CoA. It shows a high substrate specificity for crotonyl-CoA, a short-chain-length (C4), but no measurable activity is observed with shorter (C3) or longer-chain-length enoyl-CoA thioesters. This is Crotonyl-CoA reductase (ccr) from Streptomyces collinus.